The sequence spans 228 residues: uncharacterized protein (228 aa).

Residues 196–228 (VKITELLDKAKISINDLNKTIEKLNETVNKYHG) are a coiled coil.

This is an uncharacterized protein from Acanthamoeba polyphaga (Amoeba).